The sequence spans 215 residues: GTP-binding nuclear protein Ran (215 aa).

One can recognise a Small GTPase Ran-type domain in the interval 6-170 (DIPTFKLVLV…LWLARKLLGD (165 aa)). Residues 17–24 (DGGTGKTT), 35–41 (EKKYVAT), Gly67, 121–124 (NKVD), and 149–151 (SAK) contribute to the GTP site. A switch-I region spans residues 36–44 (KKYVATLGV). Positions 67-83 (GQEKFGGLRDGYYIQGQ) are switch-II.

Belongs to the small GTPase superfamily. Ran family. Found in a nuclear export complex with RanGTP, exportin and pre-miRNA.

Its subcellular location is the nucleus. Functionally, GTP-binding protein involved in nucleocytoplasmic transport. Required for the import of protein into the nucleus and also for RNA export. Involved in chromatin condensation and control of cell cycle. The chain is GTP-binding nuclear protein Ran from Brugia malayi (Filarial nematode worm).